The following is a 348-amino-acid chain: Dihydroorotase (348 aa).

Zn(2+)-binding residues include His14 and His16. Substrate is bound by residues 16–18 (HLR) and Asn42. 3 residues coordinate Zn(2+): Lys100, His137, and His175. N6-carboxylysine is present on Lys100. Residue His137 coordinates substrate. A substrate-binding site is contributed by Leu220. Asp248 is a Zn(2+) binding site. The active site involves Asp248. Residues His252 and Ala264 each contribute to the substrate site.

It belongs to the metallo-dependent hydrolases superfamily. DHOase family. Class II DHOase subfamily. In terms of assembly, homodimer. It depends on Zn(2+) as a cofactor.

The catalysed reaction is (S)-dihydroorotate + H2O = N-carbamoyl-L-aspartate + H(+). Its pathway is pyrimidine metabolism; UMP biosynthesis via de novo pathway; (S)-dihydroorotate from bicarbonate: step 3/3. Its function is as follows. Catalyzes the reversible cyclization of carbamoyl aspartate to dihydroorotate. In Pseudomonas putida (strain ATCC 700007 / DSM 6899 / JCM 31910 / BCRC 17059 / LMG 24140 / F1), this protein is Dihydroorotase.